Here is a 318-residue protein sequence, read N- to C-terminus: tRNA-cytidine(32) 2-sulfurtransferase (318 aa).

Positions serine 52–serine 57 match the PP-loop motif motif. [4Fe-4S] cluster is bound by residues cysteine 127, cysteine 130, and cysteine 218.

Belongs to the TtcA family. Homodimer. It depends on Mg(2+) as a cofactor. [4Fe-4S] cluster is required as a cofactor.

The protein resides in the cytoplasm. It catalyses the reaction cytidine(32) in tRNA + S-sulfanyl-L-cysteinyl-[cysteine desulfurase] + AH2 + ATP = 2-thiocytidine(32) in tRNA + L-cysteinyl-[cysteine desulfurase] + A + AMP + diphosphate + H(+). It functions in the pathway tRNA modification. In terms of biological role, catalyzes the ATP-dependent 2-thiolation of cytidine in position 32 of tRNA, to form 2-thiocytidine (s(2)C32). The sulfur atoms are provided by the cysteine/cysteine desulfurase (IscS) system. The polypeptide is tRNA-cytidine(32) 2-sulfurtransferase (Actinobacillus pleuropneumoniae serotype 3 (strain JL03)).